Reading from the N-terminus, the 620-residue chain is Chaperone protein DnaK (620 aa).

Thr-197 is modified (phosphothreonine; by autocatalysis). Residues 597-620 (AMANKNNAEQPKKKDDDVIDAEVE) form a disordered region.

The protein belongs to the heat shock protein 70 family.

In terms of biological role, acts as a chaperone. The polypeptide is Chaperone protein DnaK (Helicobacter acinonychis (strain Sheeba)).